The following is a 202-amino-acid chain: uncharacterized protein (202 aa).

Belongs to the NAD(P)H dehydrogenase (quinone) family.

This is an uncharacterized protein from Haemophilus influenzae (strain ATCC 51907 / DSM 11121 / KW20 / Rd).